The following is a 427-amino-acid chain: Thymidine phosphorylase (427 aa).

The protein belongs to the thymidine/pyrimidine-nucleoside phosphorylase family. As to quaternary structure, homodimer.

It carries out the reaction thymidine + phosphate = 2-deoxy-alpha-D-ribose 1-phosphate + thymine. In terms of biological role, the enzymes which catalyze the reversible phosphorolysis of pyrimidine nucleosides are involved in the degradation of these compounds and in their utilization as carbon and energy sources, or in the rescue of pyrimidine bases for nucleotide synthesis. The sequence is that of Thymidine phosphorylase (deoA) from Mycobacterium tuberculosis (strain CDC 1551 / Oshkosh).